The primary structure comprises 246 residues: 3-deoxy-manno-octulosonate cytidylyltransferase (246 aa).

It belongs to the KdsB family.

It localises to the cytoplasm. The catalysed reaction is 3-deoxy-alpha-D-manno-oct-2-ulosonate + CTP = CMP-3-deoxy-beta-D-manno-octulosonate + diphosphate. It participates in nucleotide-sugar biosynthesis; CMP-3-deoxy-D-manno-octulosonate biosynthesis; CMP-3-deoxy-D-manno-octulosonate from 3-deoxy-D-manno-octulosonate and CTP: step 1/1. Its pathway is bacterial outer membrane biogenesis; lipopolysaccharide biosynthesis. In terms of biological role, activates KDO (a required 8-carbon sugar) for incorporation into bacterial lipopolysaccharide in Gram-negative bacteria. This Rickettsia prowazekii (strain Madrid E) protein is 3-deoxy-manno-octulosonate cytidylyltransferase.